Reading from the N-terminus, the 144-residue chain is MAASKVKQDMPPPGGYGPIDYKRNLPRRGLSGYSMLAIGIGTLIYGHWSIMKWNRERRRLQIEDFEARIALLPLLQAETDRRTLQMLRENLEEEAIIMKDVPDWKVGESVFHTTRWVPPLIGELYGLRTTEEALHASHGFMWYT.

Ala2 carries the N-acetylalanine modification. The helical transmembrane segment at 30-51 (LSGYSMLAIGIGTLIYGHWSIM) threads the bilayer. An important for inducing cell death region spans residues 102 to 144 (PDWKVGESVFHTTRWVPPLIGELYGLRTTEEALHASHGFMWYT).

Belongs to the complex I NDUFA13 subunit family. In terms of assembly, complex I is composed of 45 different subunits. Interacts with CARD15, but not with CARD4. Interacts with STAT3, but not with STAT1, STAT2 and STAT5A. Interacts with OLFM4. As to quaternary structure, (Microbial infection) Interacts with HHV-8 IRF1, in the nucleus, with HPV-16 E6 and SV40 LT. As to expression, widely expressed, with highest expression in heart, skeletal muscle, liver, kidney and placenta. In intestinal mucosa, down-regulated in areas involved in Crohn disease and ulcerative colitis.

Its subcellular location is the mitochondrion inner membrane. It localises to the nucleus. Accessory subunit of the mitochondrial membrane respiratory chain NADH dehydrogenase (Complex I), that is believed not to be involved in catalysis. Complex I functions in the transfer of electrons from NADH to the respiratory chain. The immediate electron acceptor for the enzyme is believed to be ubiquinone. Involved in the interferon/all-trans-retinoic acid (IFN/RA) induced cell death. This apoptotic activity is inhibited by interaction with viral IRF1. Prevents the transactivation of STAT3 target genes. May play a role in CARD15-mediated innate mucosal responses and serve to regulate intestinal epithelial cell responses to microbes. The sequence is that of NADH dehydrogenase [ubiquinone] 1 alpha subcomplex subunit 13 (NDUFA13) from Homo sapiens (Human).